Here is a 318-residue protein sequence, read N- to C-terminus: HPr kinase/phosphorylase (318 aa).

Active-site residues include His146 and Lys167. 161–168 (GESGLGKS) contacts ATP. Ser168 contacts Mg(2+). The active-site Proton acceptor; for phosphorylation activity. Proton donor; for dephosphorylation activity is Asp185. Residues 209-218 (LEVRGIGLLD) are important for the catalytic mechanism of both phosphorylation and dephosphorylation. Glu210 lines the Mg(2+) pocket. The active site involves Arg252. Residues 273 to 278 (QVVAGR) are important for the catalytic mechanism of dephosphorylation.

This sequence belongs to the HPrK/P family. As to quaternary structure, homohexamer. It depends on Mg(2+) as a cofactor.

It catalyses the reaction [HPr protein]-L-serine + ATP = [HPr protein]-O-phospho-L-serine + ADP + H(+). The catalysed reaction is [HPr protein]-O-phospho-L-serine + phosphate + H(+) = [HPr protein]-L-serine + diphosphate. Its function is as follows. Catalyzes the ATP- as well as the pyrophosphate-dependent phosphorylation of a specific serine residue in HPr, a phosphocarrier protein of the phosphoenolpyruvate-dependent sugar phosphotransferase system (PTS). HprK/P also catalyzes the pyrophosphate-producing, inorganic phosphate-dependent dephosphorylation (phosphorolysis) of seryl-phosphorylated HPr (P-Ser-HPr). The protein is HPr kinase/phosphorylase of Verminephrobacter eiseniae (strain EF01-2).